Reading from the N-terminus, the 502-residue chain is Maturase K (502 aa).

Belongs to the intron maturase 2 family. MatK subfamily.

The protein localises to the plastid. It localises to the chloroplast. Its function is as follows. Usually encoded in the trnK tRNA gene intron. Probably assists in splicing its own and other chloroplast group II introns. This chain is Maturase K, found in Theobroma cacao (Cacao).